A 351-amino-acid polypeptide reads, in one-letter code: uncharacterized protein (351 aa).

The first 27 residues, 1–27 (MKNKKRVLIASSLSCAILLLSAATTQA), serve as a signal peptide directing secretion. The segment at 29–71 (SAHKDSQDQNKKEHVDKSQQKDKRNVTNKDKNSTVPDDIGKNG) is disordered. Positions 30–60 (AHKDSQDQNKKEHVDKSQQKDKRNVTNKDKN) are enriched in basic and acidic residues.

The protein belongs to the aerolysin family.

This is an uncharacterized protein from Staphylococcus aureus (strain Mu50 / ATCC 700699).